The primary structure comprises 104 residues: Large ribosomal subunit protein uL24 (104 aa).

It belongs to the universal ribosomal protein uL24 family. In terms of assembly, part of the 50S ribosomal subunit.

One of two assembly initiator proteins, it binds directly to the 5'-end of the 23S rRNA, where it nucleates assembly of the 50S subunit. Its function is as follows. One of the proteins that surrounds the polypeptide exit tunnel on the outside of the subunit. This chain is Large ribosomal subunit protein uL24, found in Herminiimonas arsenicoxydans.